A 146-amino-acid chain; its full sequence is Extracellular globin-2A (146 aa).

The Globin domain maps to 4–146 (HCGPLQRLKV…EVIYPGIKHD (143 aa)). Cys5 and Cys134 are oxidised to a cystine. Residue His97 participates in heme b binding.

The protein belongs to the globin family. In terms of assembly, disulfide bonded trimer of chains IIA, IIB, and IIC.

The polypeptide is Extracellular globin-2A (Tylorrhynchus heterochetus (Japanese palolo worm)).